Reading from the N-terminus, the 201-residue chain is Small ribosomal subunit protein uS4 (201 aa).

Residues 1 to 38 (MARYTGPATRKSRRLGVDLVGGDQSFEKRPYPPGQHGR) form a disordered region. Residues 91-157 (SRLDNVVYRA…DPFVIARETA (67 aa)) form the S4 RNA-binding domain.

Belongs to the universal ribosomal protein uS4 family. In terms of assembly, part of the 30S ribosomal subunit. Contacts protein S5. The interaction surface between S4 and S5 is involved in control of translational fidelity.

Its function is as follows. One of the primary rRNA binding proteins, it binds directly to 16S rRNA where it nucleates assembly of the body of the 30S subunit. With S5 and S12 plays an important role in translational accuracy. The chain is Small ribosomal subunit protein uS4 from Mycobacterium sp. (strain JLS).